Reading from the N-terminus, the 282-residue chain is MKIILAKQAGFCFGVKRATQIAFEAAGKGGKTFTLGPIIHSPQVVQKLEEMGVKALENVAGMDEGTIIIRSHGAASDELEEAVRKQLDILDATCPFVKKAQEHVKNLSNSGYDVVVVGDADHPEVQGIVSYATGKVYVVASGEEAVKLPKMGKIGVVAQTTQSFENLRHVVDACLVKGGEIRVFHTICDATAVRQEEAKKLASQVDCMVVIGGYNSANTKRLAEVSAEIQPRTHHIEMAQQLDPAWFEGVKIVGITAGASTPKWIIDEVLEQIESIAKDKNR.

Cys12 is a binding site for [4Fe-4S] cluster. Residues His40 and His72 each coordinate (2E)-4-hydroxy-3-methylbut-2-enyl diphosphate. Dimethylallyl diphosphate contacts are provided by His40 and His72. The isopentenyl diphosphate site is built by His40 and His72. Cys94 is a binding site for [4Fe-4S] cluster. His122 contacts (2E)-4-hydroxy-3-methylbut-2-enyl diphosphate. His122 is a dimethylallyl diphosphate binding site. His122 lines the isopentenyl diphosphate pocket. Catalysis depends on Glu124, which acts as the Proton donor. Thr160 is a (2E)-4-hydroxy-3-methylbut-2-enyl diphosphate binding site. Residue Cys188 participates in [4Fe-4S] cluster binding. Residues Ser216, Asn218, and Ser260 each contribute to the (2E)-4-hydroxy-3-methylbut-2-enyl diphosphate site. The dimethylallyl diphosphate site is built by Ser216, Asn218, and Ser260. Residues Ser216, Asn218, and Ser260 each coordinate isopentenyl diphosphate.

It belongs to the IspH family. It depends on [4Fe-4S] cluster as a cofactor.

The catalysed reaction is isopentenyl diphosphate + 2 oxidized [2Fe-2S]-[ferredoxin] + H2O = (2E)-4-hydroxy-3-methylbut-2-enyl diphosphate + 2 reduced [2Fe-2S]-[ferredoxin] + 2 H(+). It catalyses the reaction dimethylallyl diphosphate + 2 oxidized [2Fe-2S]-[ferredoxin] + H2O = (2E)-4-hydroxy-3-methylbut-2-enyl diphosphate + 2 reduced [2Fe-2S]-[ferredoxin] + 2 H(+). The protein operates within isoprenoid biosynthesis; dimethylallyl diphosphate biosynthesis; dimethylallyl diphosphate from (2E)-4-hydroxy-3-methylbutenyl diphosphate: step 1/1. It functions in the pathway isoprenoid biosynthesis; isopentenyl diphosphate biosynthesis via DXP pathway; isopentenyl diphosphate from 1-deoxy-D-xylulose 5-phosphate: step 6/6. Its function is as follows. Catalyzes the conversion of 1-hydroxy-2-methyl-2-(E)-butenyl 4-diphosphate (HMBPP) into a mixture of isopentenyl diphosphate (IPP) and dimethylallyl diphosphate (DMAPP). Acts in the terminal step of the DOXP/MEP pathway for isoprenoid precursor biosynthesis. The polypeptide is 4-hydroxy-3-methylbut-2-enyl diphosphate reductase (Geotalea daltonii (strain DSM 22248 / JCM 15807 / FRC-32) (Geobacter daltonii)).